The chain runs to 225 residues: MSNLCVLFFQFFFLAQFFAEASPLTFELNKGRKECLYTLTPEIDCTISYYFAVQQGESNDFDVNYEIFAPDDKNKPIIERSGERQGEWSFIGQHKGEYAICFYGGKAHDKIVDLDFKYNCERQDDIRNERRKARKAQRNLRDSKTDPLQDSVENSIDTIERQLHVLERNIQYYKSRNTRNHHTVCSTEHRIVMFSIYGILLIIGMSCAQIAILEFIFRESRKHNV.

The N-terminal stretch at 1-23 is a signal peptide; it reads MSNLCVLFFQFFFLAQFFAEASP. Residues 24-195 lie on the Lumenal side of the membrane; it reads LTFELNKGRK…STEHRIVMFS (172 aa). Positions 33-172 constitute a GOLD domain; the sequence is KECLYTLTPE…LHVLERNIQY (140 aa). Residues 129–138 are compositionally biased toward basic residues; the sequence is ERRKARKAQR. The disordered stretch occupies residues 129-149; the sequence is ERRKARKAQRNLRDSKTDPLQ. A helical transmembrane segment spans residues 196-216; that stretch reads IYGILLIIGMSCAQIAILEFI. Residues 217 to 225 are Cytoplasmic-facing; sequence FRESRKHNV.

It belongs to the EMP24/GP25L family.

The protein localises to the endoplasmic reticulum membrane. Its function is as follows. Involved in vesicular protein trafficking. This is Protein ERP3 (ERP3) from Saccharomyces cerevisiae (strain ATCC 204508 / S288c) (Baker's yeast).